A 172-amino-acid chain; its full sequence is Large ribosomal subunit protein bL17 (172 aa).

The tract at residues 153-172 (AQAAEPVAAAEPATPATTAG) is disordered.

Belongs to the bacterial ribosomal protein bL17 family. Part of the 50S ribosomal subunit. Contacts protein L32.

This is Large ribosomal subunit protein bL17 from Sorangium cellulosum (strain So ce56) (Polyangium cellulosum (strain So ce56)).